The primary structure comprises 437 residues: Aromatic peroxidase fscJ (437 aa).

An N-terminal signal peptide occupies residues 1 to 19 (MKWLHLLSVVACVADEVYA). Cys-83 contacts heme.

The protein belongs to the chloroperoxidase family. The cofactor is heme b.

Its pathway is secondary metabolite biosynthesis. In terms of biological role, aromatic peroxidase; part of the fragmented gene cluster that mediates the biosynthesis of fusarochromene, a tryptophan-derived metabolite closely related to a group of mycotoxins including fusarochromanone. The role of fscJ within the pathway has not been identified yet. The first step of the pathway is the epimerization of L-tryptophan to D-tryptophan in the presence of the NRPS-like tryptophan epimerase fscC. D-tryptophan is subsequently hydroxylated by the tryptophan 6-hydroxylase fscE to yield 6-hydroxytryptophan. The pyrrole ring undergoes cleavaged by the tryptophan 2,3-dioxygenase fscD and is finally converted to 4-hydroxykyrunenine by the hydrolase fscH. The NRPS-like oxidoreductase fscA reduces the carboxyl group to primary alcohol and the DMATS-type prenyltransferase fscG performs prenylation, followed by the formation of a chromene ring catalyzed by the oxidoreductase fscI, which leads to desacetylfusarochromene. Epoxidation by fscF and rearrangement reactions of chromene double bonds convert compound desacetylfusarochromene to fusarochromanones. Although specific acetyltransferases were not found near the fsc gene cluster, several predicted enzymes containing the N-acetyltransferase superfamily domain are present in the genome of F.equiseti. These predicted enzymes may have the potential to convert desacetylfusarochromene to fusarochromene. This is Aromatic peroxidase fscJ from Fusarium equiseti (Fusarium scirpi).